Reading from the N-terminus, the 1000-residue chain is ATP-dependent DNA/RNA helicase DHX36 (1000 aa).

The segment at 1 to 43 is required for recruitment to cytoplasmic stress granules; that stretch reads MSYDYHQSWSRDGGPRGSGQGSGGGGGGSRGSGGGGGGRGGRG. The tract at residues 1-53 is disordered; the sequence is MSYDYHQSWSRDGGPRGSGQGSGGGGGGSRGSGGGGGGRGGRGRHPAHLKGRE. The required for the pre-miR-134 transport stretch occupies residues 1-96; the sequence is MSYDYHQSWS…IVQLLNSVQA (96 aa). The necessary for nuclear and nucleolar caps localizations stretch occupies residues 1–192; that stretch reads MSYDYHQSWS…KKTDPRYIEM (192 aa). The span at 15-40 shows a compositional bias: gly residues; sequence PRGSGQGSGGGGGGSRGSGGGGGGRG. The interval 45–67 is DSM (DHX36-specific motif); sequence HPAHLKGREIGLWYAKKQTQKNK. The interval 45–97 is required for G4-DNA- and G4-RNA-binding; that stretch reads HPAHLKGREIGLWYAKKQTQKNKEAERQERAVVHMDERREEQIVQLLNSVQAK. RecA-like domain stretches follow at residues 98 to 378 and 379 to 620; these read NDKD…MIHI and PGFT…DYQL. The residue at position 153 (Ser-153) is a Phosphoserine. A Helicase ATP-binding domain is found at 209–379; the sequence is VNLINNHQVT…FGNCPMIHIP (171 aa). 225–230 is a binding site for ATP; it reads GCGKTT. The necessary for interaction with single-stranded DNA at the 3'-end of the G4-DNA structure stretch occupies residues 257–309; the sequence is RRISAISVAERVAAERAESCGNGNSTGYQIRLQSRLPRKQGSILYCTTGIILQ. The DEAH box motif lies at 326 to 329; it reads DEIH. 2 residues coordinate Mg(2+): Glu-327 and His-329. Residues 469-639 form the Helicase C-terminal domain; that stretch reads ALIRYIVLEE…ELCLQIKILR (171 aa). The necessary for interaction with single-stranded DNA at the 3'-end of the G4-DNA structure stretch occupies residues 490-549; the sequence is WDNISTLHDLLMSQVMFKSDRFLIIPLHSLMPTVNQTQVFKKTPPGVRKIVIATNIAETS. The short motif at 509–520 is the Nuclear localization signal element; sequence DRFLIIPLHSLM. ATP-binding positions include Ser-549 and 594–597; that span reads RAGR. Residues 621–690 form a WH domain region; the sequence is PEILRTPLEE…LGVHLARLPV (70 aa). Necessary for interaction with single-stranded DNA at the 3'-end of the G4-DNA structure stretches follow at residues 630 to 689, 841 to 852, and 862 to 892; these read ELCL…ARLP, NLGKKRKMVKVH, and HPKS…IYLY. The OB-fold-like subdomains stretch occupies residues 833–897; that stretch reads PKVAKIRLNL…SIYLYDCTEV (65 aa). N6-acetyllysine is present on Lys-939.

As to quaternary structure, found in a multi-helicase-TICAM1 complex at least composed of DHX36, DDX1, DDX21 and TICAM1; this complex exists in resting cells with or without dsRNA poly(I:C) ligand stimulation. Interacts (via C-terminus) with TICAM1 (via TIR domain). Interacts (via C-terminus) with DDX21; this interaction serves as bridges to TICAM1. Interacts with TERT; this interaction is dependent on the ability of DHX36 to bind to the G-quadruplex RNA (G4-RNA) structure present in the telomerase RNA template component (TERC). Interacts with DKC1; this interaction is dependent on the ability of DHX36 to bind to the G4-RNA structure present in TERC. Interacts with PARN; this interaction stimulates PARN to enhance uPA mRNA decay. Interacts with EXOSC3; this interaction occurs in a RNase-insensitive manner. Interacts with EXOSC10; this interaction occurs in a RNase-insensitive manner. Interacts with ILF3; this interaction occurs in a RNA-dependent manner. Interacts with ELAVL1; this interaction occurs in an RNA-dependent manner. Interacts with DDX5; this interaction occurs in a RNA-dependent manner. Interacts with DDX17; this interaction occurs in a RNA-dependent manner. Interacts with HDAC1; this interaction occurs in a RNA-dependent manner. Interacts with HDAC3; this interaction occurs in a RNA-dependent manner. Interacts with HDAC4. Interacts with AGO1. Interacts with AGO2. Interacts with ERCC6. It depends on Mg(2+) as a cofactor.

Its subcellular location is the nucleus. The protein resides in the cytoplasm. The protein localises to the cytosol. It is found in the stress granule. It localises to the nucleus speckle. Its subcellular location is the chromosome. The protein resides in the telomere. The protein localises to the mitochondrion. It is found in the perikaryon. It localises to the cell projection. Its subcellular location is the dendrite. The protein resides in the axon. The catalysed reaction is ATP + H2O = ADP + phosphate + H(+). With respect to regulation, ATPase activity is enhanced in the presence of homomeric poly(U) RNAs, but not by double-stranded DNA (dsDNA), double-stranded RNA (dsRNA) and tRNA. Multifunctional ATP-dependent helicase that unwinds G-quadruplex (G4) structures. Plays a role in many biological processes such as genomic integrity, gene expression regulations and as a sensor to initiate antiviral responses. G4 structures correspond to helical structures containing guanine tetrads. Binds with high affinity to and unwinds G4 structures that are formed in nucleic acids (G4-DNA and G4-RNA). Plays a role in genomic integrity. Converts the G4-RNA structure present in telomerase RNA template component (TREC) into a double-stranded RNA to promote P1 helix formation that acts as a template boundary ensuring accurate reverse transcription. Plays a role in transcriptional regulation. Resolves G4-DNA structures in promoters of genes, such as YY1, KIT/c-kit and ALPL and positively regulates their expression. Plays a role in post-transcriptional regulation. Unwinds a G4-RNA structure located in the 3'-UTR polyadenylation site of the pre-mRNA TP53 and stimulates TP53 pre-mRNA 3'-end processing in response to ultraviolet (UV)-induced DNA damage. Binds to the precursor-microRNA-134 (pre-miR-134) terminal loop and regulates its transport into the synapto-dendritic compartment. Involved in the pre-miR-134-dependent inhibition of target gene expression and the control of dendritic spine size. Plays a role in the regulation of cytoplasmic mRNA translation and mRNA stability. Binds to both G4-RNA structures and alternative non-quadruplex-forming sequence within the 3'-UTR of the PITX1 mRNA regulating negatively PITX1 protein expression. Binds to both G4-RNA structure in the 5'-UTR and AU-rich elements (AREs) localized in the 3'-UTR of NKX2-5 mRNA to either stimulate protein translation or induce mRNA decay in an ELAVL1-dependent manner, respectively. Also binds to ARE sequences present in several mRNAs mediating exosome-mediated 3'-5' mRNA degradation. Involved in cytoplasmic urokinase-type plasminogen activator (uPA) mRNA decay. Component of a multi-helicase-TICAM1 complex that acts as a cytoplasmic sensor of viral double-stranded RNA (dsRNA) and plays a role in the activation of a cascade of antiviral responses including the induction of pro-inflammatory cytokines via the adapter molecule TICAM1. Required for the early embryonic development and hematopoiesis. Involved in the regulation of cardioblast differentiation and proliferation during heart development. Involved in spermatogonia differentiation. May play a role in ossification. This Rattus norvegicus (Rat) protein is ATP-dependent DNA/RNA helicase DHX36.